The chain runs to 407 residues: Probable tRNA sulfurtransferase (407 aa).

Positions 61 to 165 constitute a THUMP domain; the sequence is NEITYRLSKI…LDAIYMYEEV (105 aa). ATP contacts are provided by residues 183-184, 208-209, Arg265, Gly287, and Gln296; these read ML and HF.

Belongs to the ThiI family.

The protein resides in the cytoplasm. The enzyme catalyses [ThiI sulfur-carrier protein]-S-sulfanyl-L-cysteine + a uridine in tRNA + 2 reduced [2Fe-2S]-[ferredoxin] + ATP + H(+) = [ThiI sulfur-carrier protein]-L-cysteine + a 4-thiouridine in tRNA + 2 oxidized [2Fe-2S]-[ferredoxin] + AMP + diphosphate. It catalyses the reaction [ThiS sulfur-carrier protein]-C-terminal Gly-Gly-AMP + S-sulfanyl-L-cysteinyl-[cysteine desulfurase] + AH2 = [ThiS sulfur-carrier protein]-C-terminal-Gly-aminoethanethioate + L-cysteinyl-[cysteine desulfurase] + A + AMP + 2 H(+). It participates in cofactor biosynthesis; thiamine diphosphate biosynthesis. Its function is as follows. Catalyzes the ATP-dependent transfer of a sulfur to tRNA to produce 4-thiouridine in position 8 of tRNAs, which functions as a near-UV photosensor. Also catalyzes the transfer of sulfur to the sulfur carrier protein ThiS, forming ThiS-thiocarboxylate. This is a step in the synthesis of thiazole, in the thiamine biosynthesis pathway. The sulfur is donated as persulfide by IscS. The polypeptide is Probable tRNA sulfurtransferase (Staphylococcus aureus (strain NCTC 8325 / PS 47)).